Reading from the N-terminus, the 185-residue chain is Elongation factor P (185 aa).

Belongs to the elongation factor P family.

The protein resides in the cytoplasm. It functions in the pathway protein biosynthesis; polypeptide chain elongation. Its function is as follows. Involved in peptide bond synthesis. Stimulates efficient translation and peptide-bond synthesis on native or reconstituted 70S ribosomes in vitro. Probably functions indirectly by altering the affinity of the ribosome for aminoacyl-tRNA, thus increasing their reactivity as acceptors for peptidyl transferase. The polypeptide is Elongation factor P (Burkholderia lata (strain ATCC 17760 / DSM 23089 / LMG 22485 / NCIMB 9086 / R18194 / 383)).